The primary structure comprises 347 residues: Protein RecA (347 aa).

Residue 67-74 (GPESSGKT) participates in ATP binding.

This sequence belongs to the RecA family.

Its subcellular location is the cytoplasm. Functionally, can catalyze the hydrolysis of ATP in the presence of single-stranded DNA, the ATP-dependent uptake of single-stranded DNA by duplex DNA, and the ATP-dependent hybridization of homologous single-stranded DNAs. It interacts with LexA causing its activation and leading to its autocatalytic cleavage. The sequence is that of Protein RecA from Helicobacter pylori (strain Shi470).